The chain runs to 295 residues: ER-localized J domain-containing protein 5 (295 aa).

The signal sequence occupies residues 1–20 (MNGYWKPALVVLGLVSLSYA). The Lumenal portion of the chain corresponds to 21 to 130 (FTTIETEIFQ…GFYFSRMKPK (110 aa)). A J domain is found at 42–110 (DMNFYKFLKL…RKIYDYYLQN (69 aa)). Residues 131–151 (TWFLLAFIWIVVNIGQYIISI) form a helical membrane-spanning segment. Residues 152–295 (IQYRSQRSRI…PNGKVIYSRK (144 aa)) are Cytoplasmic-facing. The segment at 259–287 (KYDGNQTKKGNKVKKGSAKKGQKKMELPN) is disordered. The segment covering 267-280 (KGNKVKKGSAKKGQ) has biased composition (basic residues).

This sequence belongs to the DnaJ family.

Its subcellular location is the endoplasmic reticulum membrane. Functionally, dnaJ-like chaperone required for the folding capacity of the endoplasmic reticulum. This chain is ER-localized J domain-containing protein 5 (ERJ5), found in Saccharomyces cerevisiae (strain ATCC 204508 / S288c) (Baker's yeast).